The sequence spans 801 residues: Fibroblast growth factor receptor 3 (801 aa).

The first 20 residues, 1–20 (MVVPACVLVFCVAVVAGATS), serve as a signal peptide directing secretion. Residues 21–369 (EPPGPEQRVV…TDEAGSVYAG (349 aa)) are Extracellular-facing. Residues 22–124 (PPGPEQRVVR…VLCHFSVRVT (103 aa)) form the Ig-like C2-type 1 domain. Cys59 and Cys107 are joined by a disulfide. N-linked (GlcNAc...) asparagine glycosylation occurs at Asn96. The tract at residues 125–146 (DAPSSGDDEDGEDVAEDTGAPY) is disordered. A compositionally biased stretch (acidic residues) spans 130–140 (GDDEDGEDVAE). 2 Ig-like C2-type domains span residues 145-238 (PYWT…YTLD) and 247-349 (PILQ…AWLV). Cys170 and Cys222 are disulfide-bonded. Residues Asn219, Asn256, Asn288, Asn309, and Asn322 are each glycosylated (N-linked (GlcNAc...) asparagine). A disulfide bridge links Cys269 with Cys333. A helical membrane pass occupies residues 370–390 (VLSYGVVFFLFILVVAAVILC). The Cytoplasmic segment spans residues 391–801 (RLRSPPKKGL…GPPSNGGPRT (411 aa)). 2 positions are modified to phosphoserine: Ser438 and Ser439. The Protein kinase domain maps to 466–756 (LTLGKPLGEG…LTVTSTDEYL (291 aa)). Residues 472–480 (LGEGCFGQV) and Lys502 each bind ATP. The active-site Proton acceptor is the Asp611. 4 positions are modified to phosphotyrosine; by autocatalysis: Tyr641, Tyr642, Tyr719, and Tyr755. Positions 762 to 801 (FEQYSPGGQDTPSSSSSGDDSVFTHDLLPPGPPSNGGPRT) are disordered. Residues 766 to 782 (SPGGQDTPSSSSSGDDS) show a composition bias toward low complexity. Pro residues predominate over residues 790–801 (PPGPPSNGGPRT).

The protein belongs to the protein kinase superfamily. Tyr protein kinase family. Fibroblast growth factor receptor subfamily. As to quaternary structure, monomer. Homodimer after ligand binding. Interacts with FGF1, FGF2, FGF4, FGF6; FGF8, FGF9, FGF10, FGF17, FGF18, FGF19, FGF20 and FGF23 (in vitro). Interacts with KLB. Affinity for fibroblast growth factors (FGFs) is increased by heparan sulfate glycosaminoglycans that function as coreceptors. Likewise, KLB increases the affinity for FGF19 and FGF21. Interacts with PIK3R1, PLCG1, SOCS1 and SOCS3. Autophosphorylated. Binding of FGF family members together with heparan sulfate proteoglycan or heparin promotes receptor dimerization and autophosphorylation on tyrosine residues. Autophosphorylation occurs in trans between the two FGFR molecules present in the dimer. Phosphorylation at Tyr-719 is essential for stimulation of cell proliferation and activation of PIK3R1, STAT1 and MAP kinase signaling. Phosphorylation at Tyr-755 is required for interaction with PIK3R1 and PLCG1. Post-translationally, ubiquitinated. Is rapidly ubiquitinated after ligand binding and autophosphorylation, leading to receptor internalization and degradation. Subject to both proteasomal and lysosomal degradation. In terms of processing, N-glycosylated in the endoplasmic reticulum. The N-glycan chains undergo further maturation to an Endo H-resistant form in the Golgi apparatus. In embryo, expressed in heart, lung, kidney, skin, head and liver but not in muscle. In adult, highest levels in brain. Also expressed in liver, lung, kidney, testis, ovary and uterus. Very low levels in heart, thymus, spleen and muscle.

Its subcellular location is the cell membrane. It localises to the cytoplasmic vesicle. It is found in the endoplasmic reticulum. It catalyses the reaction L-tyrosyl-[protein] + ATP = O-phospho-L-tyrosyl-[protein] + ADP + H(+). Present in an inactive conformation in the absence of bound ligand. Ligand binding leads to dimerization and activation by autophosphorylation on tyrosine residues. In terms of biological role, tyrosine-protein kinase that acts as a cell-surface receptor for fibroblast growth factors and plays an essential role in the regulation of cell proliferation, differentiation and apoptosis. Plays an essential role in the regulation of chondrocyte differentiation, proliferation and apoptosis, and is required for normal skeleton development. Regulates both osteogenesis and postnatal bone mineralization by osteoblasts. Promotes apoptosis in chondrocytes, but can also promote cancer cell proliferation. Required for normal development of the inner ear. Phosphorylates PLCG1, CBL and FRS2. Ligand binding leads to the activation of several signaling cascades. Activation of PLCG1 leads to the production of the cellular signaling molecules diacylglycerol and inositol 1,4,5-trisphosphate. Phosphorylation of FRS2 triggers recruitment of GRB2, GAB1, PIK3R1 and SOS1, and mediates activation of RAS, MAPK1/ERK2, MAPK3/ERK1 and the MAP kinase signaling pathway, as well as of the AKT1 signaling pathway. Plays a role in the regulation of vitamin D metabolism. Mutations that lead to constitutive kinase activation or impair normal FGFR3 maturation, internalization and degradation lead to aberrant signaling. Over-expressed or constitutively activated FGFR3 promotes activation of STAT1, STAT5A and STAT5B. Plays a role in postnatal lung development. The protein is Fibroblast growth factor receptor 3 (Fgfr3) of Mus musculus (Mouse).